A 79-amino-acid chain; its full sequence is UPF0154 protein SSP1415 (79 aa).

A helical transmembrane segment spans residues Trp4–Leu24.

Belongs to the UPF0154 family.

The protein localises to the membrane. This Staphylococcus saprophyticus subsp. saprophyticus (strain ATCC 15305 / DSM 20229 / NCIMB 8711 / NCTC 7292 / S-41) protein is UPF0154 protein SSP1415.